We begin with the raw amino-acid sequence, 313 residues long: Homoserine O-succinyltransferase (313 aa).

Catalysis depends on C142, which acts as the Acyl-thioester intermediate. Substrate contacts are provided by K163 and S192. H235 functions as the Proton acceptor in the catalytic mechanism. E237 is a catalytic residue. Position 249 (R249) interacts with substrate.

This sequence belongs to the MetA family.

The protein localises to the cytoplasm. It catalyses the reaction L-homoserine + succinyl-CoA = O-succinyl-L-homoserine + CoA. It participates in amino-acid biosynthesis; L-methionine biosynthesis via de novo pathway; O-succinyl-L-homoserine from L-homoserine: step 1/1. Functionally, transfers a succinyl group from succinyl-CoA to L-homoserine, forming succinyl-L-homoserine. The polypeptide is Homoserine O-succinyltransferase (Shewanella baltica (strain OS195)).